Here is a 188-residue protein sequence, read N- to C-terminus: MGGGWWWARVARLARLRFRGSLQPPQRPRSGGARGSFAPGHGPRAGASPPPVSELDRADAWLLRKAHETAFLSWFRNGLLSSGIGVISFMQSDMGREAAYGFFLLGGLCVVWGGASYAVGLAALRGPMQLSLAGAAAGVGAVLAASLLWACAVGLYMGQLELDVELVPEDDGAASTEGPDEAGRPPPE.

A mitochondrion-targeting transit peptide spans 1 to 96 (MGGGWWWARV…ISFMQSDMGR (96 aa)). Positions 21-53 (SLQPPQRPRSGGARGSFAPGHGPRAGASPPPVS) are disordered. Residue S48 is modified to Phosphoserine. A run of 2 helical transmembrane segments spans residues 102-122 (FFLLGGLCVVWGGASYAVGLA) and 135-155 (AAAGVGAVLAASLLWACAVGL). The tract at residues 168–188 (PEDDGAASTEGPDEAGRPPPE) is disordered.

Belongs to the TMEM160 family. As to expression, expressed in peripheral sensory neurons of dorsal root ganglia (DRG).

The protein localises to the mitochondrion inner membrane. The protein is Transmembrane protein 160 of Mus musculus (Mouse).